A 95-amino-acid polypeptide reads, in one-letter code: Large ribosomal subunit protein bL25 (95 aa).

It belongs to the bacterial ribosomal protein bL25 family. Part of the 50S ribosomal subunit; part of the 5S rRNA/L5/L18/L25 subcomplex. Contacts the 5S rRNA. Binds to the 5S rRNA independently of L5 and L18.

This is one of the proteins that binds to the 5S RNA in the ribosome where it forms part of the central protuberance. The protein is Large ribosomal subunit protein bL25 of Shewanella amazonensis (strain ATCC BAA-1098 / SB2B).